The primary structure comprises 227 residues: MTIGRTLRAGVLALQGDVREHLAALEACGAEAVPIRRASELADLDGLVLPGGESTAIDRLIRAFELSEPLKAFIASGKPVYGSCSGMILLADRIADPALDRDGAPQRTLGGLDVTVRRNAFGRQRDSFETELKFDSLSDSERPVHAVFIRAPWIEQAGSEVEVLAVVRIEGIDRAVAVRSGNLLATSFHPEVLVQESETSELRVHELLVSMMASRLSQDANQAESRK.

Residue 52–54 (GES) participates in L-glutamine binding. Residue Cys84 is the Nucleophile of the active site. Residues Arg118 and 149–150 (IR) each bind L-glutamine. Residues His189 and Glu191 each act as charge relay system in the active site.

It belongs to the glutaminase PdxT/SNO family. In the presence of PdxS, forms a dodecamer of heterodimers. Only shows activity in the heterodimer.

The enzyme catalyses aldehydo-D-ribose 5-phosphate + D-glyceraldehyde 3-phosphate + L-glutamine = pyridoxal 5'-phosphate + L-glutamate + phosphate + 3 H2O + H(+). It carries out the reaction L-glutamine + H2O = L-glutamate + NH4(+). It functions in the pathway cofactor biosynthesis; pyridoxal 5'-phosphate biosynthesis. In terms of biological role, catalyzes the hydrolysis of glutamine to glutamate and ammonia as part of the biosynthesis of pyridoxal 5'-phosphate. The resulting ammonia molecule is channeled to the active site of PdxS. This chain is Pyridoxal 5'-phosphate synthase subunit PdxT, found in Renibacterium salmoninarum (strain ATCC 33209 / DSM 20767 / JCM 11484 / NBRC 15589 / NCIMB 2235).